Reading from the N-terminus, the 353-residue chain is Heterogeneous nuclear ribonucleoproteins A2/B1 (353 aa).

Methionine 1 carries the N-acetylmethionine modification. Threonine 4 bears the Phosphothreonine mark. A Nuclear localization signal motif is present at residues 9–15 (PLERKKR). 2 RRM domains span residues 21 to 104 (RKLF…ESGK) and 112 to 191 (KKLF…LSRQ). Lysine 22 participates in a covalent cross-link: Glycyl lysine isopeptide (Lys-Gly) (interchain with G-Cter in SUMO2). The residue at position 29 (serine 29) is a Phosphoserine. Arginine 38 carries the post-translational modification Omega-N-methylarginine. Serine 85 bears the Phosphoserine mark. Lysine 104 is subject to N6,N6-dimethyllysine; alternate. Residue lysine 104 forms a Glycyl lysine isopeptide (Lys-Gly) (interchain with G-Cter in SUMO2); alternate linkage. Glycyl lysine isopeptide (Lys-Gly) (interchain with G-Cter in SUMO2) cross-links involve residues lysine 112, lysine 120, and lysine 137. The residue at position 140 (threonine 140) is a Phosphothreonine. Serine 149 carries the phosphoserine modification. Lysine 152 participates in a covalent cross-link: Glycyl lysine isopeptide (Lys-Gly) (interchain with G-Cter in SUMO2). Threonine 159 bears the Phosphothreonine mark. Residues lysine 168 and lysine 173 each participate in a glycyl lysine isopeptide (Lys-Gly) (interchain with G-Cter in SUMO2); alternate cross-link. Residues lysine 168 and lysine 173 each carry the N6-acetyllysine; alternate modification. At threonine 176 the chain carries Phosphothreonine. A Glycyl lysine isopeptide (Lys-Gly) (interchain with G-Cter in SUMO2) cross-link involves residue lysine 186. Residues serine 189 and serine 201 each carry the phosphoserine modification. A disordered region spans residues 193 to 353 (MQEVQSSRSG…SGGYGGRSRY (161 aa)). The segment covering 202-223 (GRGGNFGFGDSRGGGGNFGPGP) has biased composition (gly residues). Arginine 203 is subject to Asymmetric dimethylarginine; alternate. A Dimethylated arginine; alternate modification is found at arginine 203. The residue at position 203 (arginine 203) is an Omega-N-methylarginine; alternate. Serine 212 bears the Phosphoserine mark. At arginine 213 the chain carries Asymmetric dimethylarginine; alternate. Dimethylated arginine; alternate is present on arginine 213. Residue arginine 213 is modified to Omega-N-methylarginine; alternate. Serine 225 is modified (phosphoserine). Residue arginine 228 is modified to Omega-N-methylarginine. A phosphoserine mark is found at serine 231 and serine 236. The residue at position 238 (arginine 238) is an Omega-N-methylarginine. Serine 259 carries the post-translational modification Phosphoserine. Arginine 266 carries the asymmetric dimethylarginine; alternate modification. Arginine 266 carries the post-translational modification Omega-N-methylarginine; alternate. The segment at 308-347 (QQPSNYGPMKSGNFGGSRNMGGPYGGGNYGPGGSGGSGGY) is nuclear targeting sequence. The span at 320 to 353 (NFGGSRNMGGPYGGGNYGPGGSGGSGGYGGRSRY) shows a compositional bias: gly residues. At serine 324 the chain carries Phosphoserine. Arginine 325 carries the post-translational modification Omega-N-methylarginine. Residue tyrosine 331 is modified to Phosphotyrosine. Phosphoserine occurs at positions 341 and 344. Phosphotyrosine is present on tyrosine 347. Omega-N-methylarginine is present on arginine 350.

In terms of assembly, identified in the spliceosome C complex. Identified in a IGF2BP1-dependent mRNP granule complex containing untranslated mRNAs. Interacts with IGF2BP1. Interacts with C9orf72. Interacts with DGCR8. Interacts with TARDBP. Interacts with CKAP5. Interacts with PPIA/CYPA. Interacts (via C-terminus) with FAM76B; the interaction results in retention of HNRNPA2B1 in the nucleus and inhibition of the NF-kappa-B-mediated inflammatory pathway. Interacts with NF-kappa-B inhibitors NFKBIA and NFKBIE; the interaction may be mediated by the RRM2 domain of HNRNPA2B1, and HNRNPA2B1 may interact simultaneously with FAM76B and either NFKBIA or NFKBIE to form a complex. Sumoylated in exosomes, promoting miRNAs-binding. Post-translationally, asymmetric dimethylation at Arg-266 constitutes the major methylation site. According to a report, methylation affects subcellular location and promotes nuclear localization. According to another report, methylation at Arg-266 does not influence nucleocytoplasmic shuttling.

The protein resides in the nucleus. The protein localises to the nucleoplasm. It is found in the cytoplasmic granule. It localises to the secreted. Its subcellular location is the extracellular exosome. Heterogeneous nuclear ribonucleoprotein (hnRNP) that associates with nascent pre-mRNAs, packaging them into hnRNP particles. The hnRNP particle arrangement on nascent hnRNA is non-random and sequence-dependent and serves to condense and stabilize the transcripts and minimize tangling and knotting. Packaging plays a role in various processes such as transcription, pre-mRNA processing, RNA nuclear export, subcellular location, mRNA translation and stability of mature mRNAs. Forms hnRNP particles with at least 20 other different hnRNP and heterogeneous nuclear RNA in the nucleus. Involved in transport of specific mRNAs to the cytoplasm in oligodendrocytes and neurons: acts by specifically recognizing and binding the A2RE (21 nucleotide hnRNP A2 response element) or the A2RE11 (derivative 11 nucleotide oligonucleotide) sequence motifs present on some mRNAs, and promotes their transport to the cytoplasm. Specifically binds single-stranded telomeric DNA sequences, protecting telomeric DNA repeat against endonuclease digestion. Also binds other RNA molecules, such as primary miRNA (pri-miRNAs): acts as a nuclear 'reader' of the N6-methyladenosine (m6A) mark by specifically recognizing and binding a subset of nuclear m6A-containing pri-miRNAs. Binding to m6A-containing pri-miRNAs promotes pri-miRNA processing by enhancing binding of DGCR8 to pri-miRNA transcripts. Involved in miRNA sorting into exosomes following sumoylation, possibly by binding (m6A)-containing pre-miRNAs. Acts as a regulator of efficiency of mRNA splicing, possibly by binding to m6A-containing pre-mRNAs. Plays a role in the splicing of pyruvate kinase PKM by binding repressively to sequences flanking PKM exon 9, inhibiting exon 9 inclusion and resulting in exon 10 inclusion and production of the PKM M2 isoform. This Pongo abelii (Sumatran orangutan) protein is Heterogeneous nuclear ribonucleoproteins A2/B1 (HNRNPA2B1).